Here is a 130-residue protein sequence, read N- to C-terminus: UPF0225 protein DR_0483 (130 aa).

This sequence belongs to the UPF0225 family.

In Deinococcus radiodurans (strain ATCC 13939 / DSM 20539 / JCM 16871 / CCUG 27074 / LMG 4051 / NBRC 15346 / NCIMB 9279 / VKM B-1422 / R1), this protein is UPF0225 protein DR_0483.